The chain runs to 1215 residues: DNA-directed RNA polymerase subunit beta' (1215 aa).

Positions 60, 62, 75, and 78 each coordinate Zn(2+). Mg(2+)-binding residues include D450, D452, and D454. Positions 818, 892, 899, and 902 each coordinate Zn(2+).

It belongs to the RNA polymerase beta' chain family. The RNAP catalytic core consists of 2 alpha, 1 beta, 1 beta' and 1 omega subunit. When a sigma factor is associated with the core the holoenzyme is formed, which can initiate transcription. The cofactor is Mg(2+). Zn(2+) is required as a cofactor.

It carries out the reaction RNA(n) + a ribonucleoside 5'-triphosphate = RNA(n+1) + diphosphate. In terms of biological role, DNA-dependent RNA polymerase catalyzes the transcription of DNA into RNA using the four ribonucleoside triphosphates as substrates. This Streptococcus suis (strain 98HAH33) protein is DNA-directed RNA polymerase subunit beta'.